Consider the following 365-residue polypeptide: Ubiquitin carboxyl-terminal hydrolase 4 (365 aa).

The N-myristoyl glycine moiety is linked to residue Gly2. Positions Phe23–Leu362 constitute a USP domain. Cys32 functions as the Nucleophile in the catalytic mechanism. The Bipartite nuclear localization signal motif lies at Lys81 to Lys98. Residue His310 is the Proton acceptor of the active site.

Belongs to the peptidase C19 family. Constitutively and ubiquitously expressed.

The protein resides in the nucleus. The enzyme catalyses Thiol-dependent hydrolysis of ester, thioester, amide, peptide and isopeptide bonds formed by the C-terminal Gly of ubiquitin (a 76-residue protein attached to proteins as an intracellular targeting signal).. Recognizes and hydrolyzes the peptide bond at the C-terminal Gly of ubiquitin. Involved in the processing of poly-ubiquitin precursors as well as that of ubiquitinated proteins. Required for the correct development of pollen. The chain is Ubiquitin carboxyl-terminal hydrolase 4 (UBP4) from Arabidopsis thaliana (Mouse-ear cress).